Here is a 332-residue protein sequence, read N- to C-terminus: Thiamine thiazole synthase (332 aa).

Residues Cys-87, Glu-108–Ala-109, Gly-116, and Val-184 contribute to the substrate site. Residue Cys-221 is modified to 2,3-didehydroalanine (Cys). Substrate-binding positions include Asp-223, His-238, Met-290, and Arg-300 to Gly-302.

Belongs to the THI4 family. As to quaternary structure, homooctamer. Fe cation serves as cofactor. Post-translationally, during the catalytic reaction, a sulfide is transferred from Cys-221 to a reaction intermediate, generating a dehydroalanine residue.

The protein localises to the cytoplasm. The protein resides in the nucleus. It catalyses the reaction [ADP-thiazole synthase]-L-cysteine + glycine + NAD(+) = [ADP-thiazole synthase]-dehydroalanine + ADP-5-ethyl-4-methylthiazole-2-carboxylate + nicotinamide + 3 H2O + 2 H(+). Its function is as follows. Involved in biosynthesis of the thiamine precursor thiazole. Catalyzes the conversion of NAD and glycine to adenosine diphosphate 5-(2-hydroxyethyl)-4-methylthiazole-2-carboxylic acid (ADT), an adenylated thiazole intermediate. The reaction includes an iron-dependent sulfide transfer from a conserved cysteine residue of the protein to a thiazole intermediate. The enzyme can only undergo a single turnover, which suggests it is a suicide enzyme. May have additional roles in adaptation to various stress conditions and in DNA damage tolerance. In Aspergillus fumigatus (strain ATCC MYA-4609 / CBS 101355 / FGSC A1100 / Af293) (Neosartorya fumigata), this protein is Thiamine thiazole synthase.